A 981-amino-acid polypeptide reads, in one-letter code: Polyhomeotic-like protein 3 (981 aa).

Residues 1–28 (MDSEPSSGTSVSTTASSTTTTTITTSSS) show a composition bias toward low complexity. 4 disordered regions span residues 1–33 (MDSEPSSGTSVSTTASSTTTTTITTSSSRMQQP), 102–127 (LSSGRPSTSPTGSVTQQSSMSQTSIL), 224–280 (LSSS…TAVT), and 307–407 (QIPL…SQSP). A compositionally biased stretch (polar residues) spans 224-255 (LSSSQNGSPKSAGQTQSLTICHNKTTVTSSKI). Phosphoserine is present on residues Ser231, Ser261, Ser269, and Ser312. The segment covering 256–266 (SQRDPSPESKK) has biased composition (basic and acidic residues). The segment covering 321–340 (QLLLQQQQQQIQPITLQSPS) has biased composition (low complexity). Residues 360–373 (APSNAQPQHCSPVQ) show a composition bias toward polar residues. Over residues 381–395 (VSPNQAQSAQQSVVV) the composition is skewed to low complexity. A phosphothreonine mark is found at Thr607 and Thr612. Ser614 carries the phosphoserine modification. A disordered region spans residues 650–690 (KSPSDPTHASAPAPPLLIPAASTRSSSTSLASSTPSLENKP). Over residues 667–686 (IPAASTRSSSTSLASSTPSL) the composition is skewed to low complexity. Glycyl lysine isopeptide (Lys-Gly) (interchain with G-Cter in SUMO2) cross-links involve residues Lys689 and Lys730. The short motif at 689-718 (KPPQAIVKPQILTHVIEGFVIQEGLEPFPV) is the HD1 element. Ser759 and Ser760 each carry phosphoserine. The FCS-type zinc-finger motif lies at 774–808 (EEMDSELLKCEFCGKMGYPNEFLRSKRFCTMSCAK). Zn(2+)-binding residues include Cys783, Cys786, Cys802, and Cys806. A Glycyl lysine isopeptide (Lys-Gly) (interchain with G-Cter in SUMO2) cross-link involves residue Lys808. Disordered regions lie at residues 825–844 (RKPDNQSLGHRGRRPSGPEG) and 863–888 (EDVASHEDPVPSAMTTRLRRQSERER). One can recognise an SAM domain in the interval 917–981 (WTVDDVWAFI…CARINSLKDS (65 aa)).

Component of a PRC1-like complex. As to expression, ubiquitous expression.

Its subcellular location is the nucleus. Component of a Polycomb group (PcG) multiprotein PRC1-like complex, a complex class required to maintain the transcriptionally repressive state of many genes, including Hox genes, throughout development. PcG PRC1 complex acts via chromatin remodeling and modification of histones; it mediates monoubiquitination of histone H2A 'Lys-119', rendering chromatin heritably changed in its expressibility. The sequence is that of Polyhomeotic-like protein 3 (Phc3) from Mus musculus (Mouse).